Consider the following 346-residue polypeptide: Elongation factor Ts (346 aa).

The tract at residues 80–83 (TDFV) is involved in Mg(2+) ion dislocation from EF-Tu.

This sequence belongs to the EF-Ts family.

The protein resides in the cytoplasm. Functionally, associates with the EF-Tu.GDP complex and induces the exchange of GDP to GTP. It remains bound to the aminoacyl-tRNA.EF-Tu.GTP complex up to the GTP hydrolysis stage on the ribosome. This Streptococcus uberis (strain ATCC BAA-854 / 0140J) protein is Elongation factor Ts.